Consider the following 71-residue polypeptide: uncharacterized protein (71 aa).

This is an uncharacterized protein from Vaccinia virus (strain Copenhagen) (VACV).